The chain runs to 317 residues: Protease HtpX homolog (317 aa).

The next 2 helical transmembrane spans lie at Thr6–Gly26 and Gly28–Ser48. Residue His130 coordinates Zn(2+). Residue Glu131 is part of the active site. Position 134 (His134) interacts with Zn(2+). 2 helical membrane passes run Met145 to Gly165 and Pro173 to Val193. A Zn(2+)-binding site is contributed by Glu202. Residues Gly283–Gly317 are disordered. Residues Gly290–Gly300 are compositionally biased toward pro residues. Positions Asp306–Gly317 are enriched in gly residues.

It belongs to the peptidase M48B family. Zn(2+) serves as cofactor.

It is found in the cell inner membrane. In Xanthobacter autotrophicus (strain ATCC BAA-1158 / Py2), this protein is Protease HtpX homolog.